The primary structure comprises 145 residues: D-aminoacyl-tRNA deacylase (145 aa).

A Gly-cisPro motif, important for rejection of L-amino acids motif is present at residues 137-138 (GP).

It belongs to the DTD family. As to quaternary structure, homodimer.

The protein localises to the cytoplasm. It carries out the reaction glycyl-tRNA(Ala) + H2O = tRNA(Ala) + glycine + H(+). It catalyses the reaction a D-aminoacyl-tRNA + H2O = a tRNA + a D-alpha-amino acid + H(+). An aminoacyl-tRNA editing enzyme that deacylates mischarged D-aminoacyl-tRNAs. Also deacylates mischarged glycyl-tRNA(Ala), protecting cells against glycine mischarging by AlaRS. Acts via tRNA-based rather than protein-based catalysis; rejects L-amino acids rather than detecting D-amino acids in the active site. By recycling D-aminoacyl-tRNA to D-amino acids and free tRNA molecules, this enzyme counteracts the toxicity associated with the formation of D-aminoacyl-tRNA entities in vivo and helps enforce protein L-homochirality. This chain is D-aminoacyl-tRNA deacylase, found in Salmonella arizonae (strain ATCC BAA-731 / CDC346-86 / RSK2980).